The sequence spans 1322 residues: BRCA2-interacting transcriptional repressor EMSY (1322 aa).

The segment at 1–478 is interaction with BRCA2; that stretch reads MPVVWPTLLD…LPKPVTATLP (478 aa). The region spanning 16 to 100 is the ENT domain; it reads CKRILRKLEL…EWSIEGRRLV (85 aa). The interaction with ZMYND11 stretch occupies residues 104 to 108; it reads PRLVP. Residues 148-162 are compositionally biased toward low complexity; it reads STTSTPTSTPVPSGS. Disordered stretches follow at residues 148–178 and 192–215; these read STTS…ASNV and VSCS…SSPV. Position 207 is a phosphothreonine (T207). Phosphoserine occurs at positions 209 and 213. O-linked (GlcNAc) serine glycosylation is found at S228 and S236. S238 is modified (phosphoserine). An O-linked (GlcNAc) threonine glycan is attached at T271. The segment covering 417 to 437 has biased composition (low complexity); the sequence is QQTQQQVAQPSPVSHQQQPQQ. Residues 417-444 form a disordered region; the sequence is QQTQQQVAQPSPVSHQQQPQQSPLPPGI. O-linked (GlcNAc) threonine glycosylation is found at T501 and T506. O-linked (GlcNAc) serine glycosylation is present at S557. Over residues 698 to 707 the composition is skewed to polar residues; that stretch reads VAEAGNSSIQ. Residues 698–736 are disordered; the sequence is VAEAGNSSIQEGKEEPQNYTDSSSSSTESSQSSQDSQPV. The segment covering 717–734 has biased composition (low complexity); sequence TDSSSSSTESSQSSQDSQ. 2 positions are modified to phosphoserine: S818 and S821. An O-linked (GlcNAc) threonine glycan is attached at T1120. A Phosphoserine modification is found at S1136. Residues 1205–1223 show a composition bias toward polar residues; that stretch reads QKCRESCSSPSTVGSSLTT. Disordered stretches follow at residues 1205–1231 and 1290–1322; these read QKCR…PPAV and QLDD…AERS. Residues 1291–1310 show a composition bias toward acidic residues; the sequence is LDDEETAMEQDIDSSTEDGT. Residues 1312–1322 show a composition bias toward polar residues; it reads PSPSQSSAERS.

In terms of assembly, homodimer. Interacts with the transactivation domain of BRCA2. Interacts with CBX1 (via chromoshadow domain). Interacts with ZMYND11. Does not interact with CBX3 or CBX5. Component of a nuclear receptor-mediated transcription complex composed of at least ZNF335, CCAR2 and EMSY; the complex stimulates the transcription of nuclear receptor target genes such as SOX9 and HOXA1. Within the complex interacts with CCAR2 and ZNF335. Components of this complex may associate with components of a histone methylation complex to form a complex at least composed of ZNF335, HCFC1, CCAR2, EMSY, MKI67, RBBP5, ASH2L and WDR5. Within this complex, interacts with ASH2L and RBBP5. Post-translationally, O-glycosylated during cytokinesis at sites identical or close to phosphorylation sites, this interferes with the phosphorylation status.

It is found in the nucleus. In terms of biological role, regulator which is able to repress transcription, possibly via its interaction with a multiprotein chromatin remodeling complex that modifies the chromatin. Its interaction with BRCA2 suggests that it may play a central role in the DNA repair function of BRCA2. Mediates ligand-dependent transcriptional activation by nuclear hormone receptors. This is BRCA2-interacting transcriptional repressor EMSY from Homo sapiens (Human).